Reading from the N-terminus, the 21-residue chain is C-phycocyanin alpha subunit (21 aa).

Belongs to the phycobiliprotein family. Heterodimer of an alpha and a beta subunit, which further assembles into trimers and the trimers into hexamers. Contains one covalently linked bilin chromophore.

The protein resides in the cellular thylakoid membrane. Its function is as follows. Light-harvesting photosynthetic bile pigment-protein from the phycobiliprotein complex (phycobilisome, PBS). Phycocyanin is the major phycobiliprotein in the PBS rod. This chain is C-phycocyanin alpha subunit, found in Anabaena sp. (strain L31).